The primary structure comprises 134 residues: MGSLNVSIVTPDGPVYEGVAQMVIARTKAGELGILPGHVPLVAPLKIDIVRLKVESGEEWVAVGGGFMEVNGEEVNILADTAEREQDIDIDRAEKAKQRAEAELSRAKEQKVDEVMAQLALQKAINRIHAKEHS.

The protein belongs to the ATPase epsilon chain family. As to quaternary structure, F-type ATPases have 2 components, CF(1) - the catalytic core - and CF(0) - the membrane proton channel. CF(1) has five subunits: alpha(3), beta(3), gamma(1), delta(1), epsilon(1). CF(0) has three main subunits: a, b and c.

Its subcellular location is the cell membrane. Its function is as follows. Produces ATP from ADP in the presence of a proton gradient across the membrane. The protein is ATP synthase epsilon chain of Listeria welshimeri serovar 6b (strain ATCC 35897 / DSM 20650 / CCUG 15529 / CIP 8149 / NCTC 11857 / SLCC 5334 / V8).